The following is a 127-amino-acid chain: Aspartate 1-decarboxylase (127 aa).

The active-site Schiff-base intermediate with substrate; via pyruvic acid is S25. S25 bears the Pyruvic acid (Ser) mark. Position 57 (T57) interacts with substrate. Residue Y58 is the Proton donor of the active site. A substrate-binding site is contributed by 73 to 75 (GAA).

It belongs to the PanD family. As to quaternary structure, heterooctamer of four alpha and four beta subunits. Pyruvate serves as cofactor. In terms of processing, is synthesized initially as an inactive proenzyme, which is activated by self-cleavage at a specific serine bond to produce a beta-subunit with a hydroxyl group at its C-terminus and an alpha-subunit with a pyruvoyl group at its N-terminus.

Its subcellular location is the cytoplasm. The enzyme catalyses L-aspartate + H(+) = beta-alanine + CO2. Its pathway is cofactor biosynthesis; (R)-pantothenate biosynthesis; beta-alanine from L-aspartate: step 1/1. Catalyzes the pyruvoyl-dependent decarboxylation of aspartate to produce beta-alanine. The protein is Aspartate 1-decarboxylase of Bacillus cytotoxicus (strain DSM 22905 / CIP 110041 / 391-98 / NVH 391-98).